A 118-amino-acid polypeptide reads, in one-letter code: Large ribosomal subunit protein bL19 (118 aa).

It belongs to the bacterial ribosomal protein bL19 family.

Its function is as follows. This protein is located at the 30S-50S ribosomal subunit interface and may play a role in the structure and function of the aminoacyl-tRNA binding site. This is Large ribosomal subunit protein bL19 from Frankia casuarinae (strain DSM 45818 / CECT 9043 / HFP020203 / CcI3).